The primary structure comprises 332 residues: Adenine deaminase (332 aa).

Residues H14, H16, and H194 each coordinate Zn(2+). The Proton donor role is filled by E197. D275 is a binding site for Zn(2+). D276 provides a ligand contact to substrate.

This sequence belongs to the metallo-dependent hydrolases superfamily. Adenosine and AMP deaminases family. Adenine deaminase type 2 subfamily. Zn(2+) is required as a cofactor.

It carries out the reaction adenine + H2O + H(+) = hypoxanthine + NH4(+). In terms of biological role, catalyzes the hydrolytic deamination of adenine to hypoxanthine. Plays an important role in the purine salvage pathway and in nitrogen catabolism. The sequence is that of Adenine deaminase from Psychrobacter cryohalolentis (strain ATCC BAA-1226 / DSM 17306 / VKM B-2378 / K5).